Consider the following 364-residue polypeptide: Phosphoserine aminotransferase (364 aa).

L-glutamate is bound at residue R46. Residues 80–81 (AR), W106, T157, D176, and Q199 contribute to the pyridoxal 5'-phosphate site. N6-(pyridoxal phosphate)lysine is present on K200. 241–242 (NT) is a pyridoxal 5'-phosphate binding site.

Belongs to the class-V pyridoxal-phosphate-dependent aminotransferase family. SerC subfamily. As to quaternary structure, homodimer. Pyridoxal 5'-phosphate serves as cofactor.

It localises to the cytoplasm. The catalysed reaction is O-phospho-L-serine + 2-oxoglutarate = 3-phosphooxypyruvate + L-glutamate. It carries out the reaction 4-(phosphooxy)-L-threonine + 2-oxoglutarate = (R)-3-hydroxy-2-oxo-4-phosphooxybutanoate + L-glutamate. It functions in the pathway amino-acid biosynthesis; L-serine biosynthesis; L-serine from 3-phospho-D-glycerate: step 2/3. The protein operates within cofactor biosynthesis; pyridoxine 5'-phosphate biosynthesis; pyridoxine 5'-phosphate from D-erythrose 4-phosphate: step 3/5. Catalyzes the reversible conversion of 3-phosphohydroxypyruvate to phosphoserine and of 3-hydroxy-2-oxo-4-phosphonooxybutanoate to phosphohydroxythreonine. The sequence is that of Phosphoserine aminotransferase from Vibrio vulnificus (strain CMCP6).